The primary structure comprises 545 residues: Thermosome subunit (545 aa).

Belongs to the TCP-1 chaperonin family. Forms an oligomeric complex of eight-membered rings.

Molecular chaperone; binds unfolded polypeptides in vitro, and has a weak ATPase activity. The polypeptide is Thermosome subunit (ths) (Methanopyrus kandleri (strain AV19 / DSM 6324 / JCM 9639 / NBRC 100938)).